The following is a 1308-amino-acid chain: Cilia- and flagella-associated protein 57 C (1308 aa).

WD repeat units lie at residues 57–99 (NEYR…RRKN), 110–154 (YNIK…KCLG), 415–454 (NHTGPINSMDICKRKPIIATCSTDKTIKIWDYEKKQIKIS), 504–546 (SPFK…NPSQ), 551–590 (GHTGRVKCIAWSSDDSFLLSCGLDGMILAWKLDQDFQHQQ), 645–689 (LLDI…GKFT), and 694–733 (HDERGVEKMKITNDDRYIITAGKDGCIMVFEIKDKDARGM). Residues 779 to 1000 (LNSRDDRIRQ…RDKIDGQKKI (222 aa)) adopt a coiled-coil conformation.

The protein belongs to the CFAP57 family. Forms a heterodimer with CFAP57A. Associates with components of the nexin-dynein regulatory complex (N-DRC) and the CFAP184:CFAP263 complex.

The protein localises to the cell projection. It is found in the cilium. In terms of biological role, associates with components of the nexin-dynein regulatory complex (N-DRC), a key regulator of ciliary/flagellar motility, and might act as an inner dynein arm (IDA) hub or linkage. The polypeptide is Cilia- and flagella-associated protein 57 C (CFAP57C) (Tetrahymena thermophila (strain SB210)).